Reading from the N-terminus, the 109-residue chain is uncharacterized protein (109 aa).

Transmembrane regions (helical) follow at residues 19-39 (LELV…CLIP) and 53-73 (YFID…FYPF).

It localises to the membrane. This is an uncharacterized protein from Saccharomyces cerevisiae (strain ATCC 204508 / S288c) (Baker's yeast).